The primary structure comprises 483 residues: Probable glycine dehydrogenase (decarboxylating) subunit 2 (483 aa).

The disordered stretch occupies residues 1–33 (MLIFEHSRKNRRNYSQAPATRPAKNNIPDHLKR). K264 carries the post-translational modification N6-(pyridoxal phosphate)lysine.

It belongs to the GcvP family. C-terminal subunit subfamily. In terms of assembly, the glycine cleavage system is composed of four proteins: P, T, L and H. In this organism, the P 'protein' is a heterodimer of two subunits. Pyridoxal 5'-phosphate serves as cofactor.

The enzyme catalyses N(6)-[(R)-lipoyl]-L-lysyl-[glycine-cleavage complex H protein] + glycine + H(+) = N(6)-[(R)-S(8)-aminomethyldihydrolipoyl]-L-lysyl-[glycine-cleavage complex H protein] + CO2. In terms of biological role, the glycine cleavage system catalyzes the degradation of glycine. The P protein binds the alpha-amino group of glycine through its pyridoxal phosphate cofactor; CO(2) is released and the remaining methylamine moiety is then transferred to the lipoamide cofactor of the H protein. This Nitrosomonas europaea (strain ATCC 19718 / CIP 103999 / KCTC 2705 / NBRC 14298) protein is Probable glycine dehydrogenase (decarboxylating) subunit 2.